A 413-amino-acid chain; its full sequence is MMKEASEPLASVTSINKQDSKVQDGEIRKEKIGTITPSKQHSSVHFFPKIMDSDSTTLIPLSRSFSQEMPIGFYQITSTQNSSTLSSRGQLASKSTILSCSHKDSSLGKQSTSSMVPRRQPQSSSDVDTYTFGNGEDYFLSLFGESKKLTAHTPQAENVSEHLSVILEEVGQFTSSSLGEIKIAEVNIKGLFVRLVNSSNEKEVEIGNHILQQNVNGHAVSLYQFPDNITLQANSTVTVWAAASEAKPQPPTDFVWEEQSKFRSSPDCTTILCKPNGEAIAWYTPIHWKQAWEKLETDIEFERCSVVVPSMRNHMFGWITASVSSTNEEKEEPIQKTPSQVYPVLYREKEIPPTVLPNKSPWCRNPNTSPHPYSSLIDSHDSDISESSLDTQLKPQPTKPKPDPGTKKKKAKS.

2 disordered regions span residues 1–25 and 102–128; these read MMKEASEPLASVTSINKQDSKVQDG and HKDSSLGKQSTSSMVPRRQPQSSSDVD. Positions 107 to 128 are enriched in polar residues; the sequence is LGKQSTSSMVPRRQPQSSSDVD. The LTD domain maps to 169-287; it reads EVGQFTSSSL…EAIAWYTPIH (119 aa). Positions 356–413 are disordered; that stretch reads LPNKSPWCRNPNTSPHPYSSLIDSHDSDISESSLDTQLKPQPTKPKPDPGTKKKKAKS. Low complexity predominate over residues 385–396; that stretch reads SESSLDTQLKPQ.

Belongs to the intermediate filament family.

The protein is Lamin tail domain-containing protein 1 (Lmntd1) of Mus musculus (Mouse).